Reading from the N-terminus, the 61-residue chain is Large ribosomal subunit protein bL32 (61 aa).

Residues 1–16 are compositionally biased toward basic residues; sequence MAVPKRKTSPSRRGMR. The tract at residues 1–61 is disordered; the sequence is MAVPKRKTSP…RQILKPKAEA (61 aa). The segment covering 28–44 has biased composition (basic and acidic residues); that stretch reads VEDKDSGELRRPHHLDL.

Belongs to the bacterial ribosomal protein bL32 family.

The chain is Large ribosomal subunit protein bL32 from Xanthobacter autotrophicus (strain ATCC BAA-1158 / Py2).